The sequence spans 21 residues: Brevinin-2-related peptide (21 aa).

Leu21 is subject to Leucine amide.

Expressed by the skin glands.

Its subcellular location is the secreted. Its function is as follows. Antimicrobial peptide with activity against Gram-negative and Gram-positive bacteria (MIC=13 uM against E.coli, MIC=25 uM against S.aureus) and fungi (MIC=25 uM against C.albicans). Also shows hemolytic activity (HC(50)=50 uM). In vitro, shows moderate inhibitory activity against HIV. In Lithobates septentrionalis (Mink frog), this protein is Brevinin-2-related peptide.